We begin with the raw amino-acid sequence, 151 residues long: Putative phosphatidylglycerol/phosphatidylinositol transfer protein 1 (151 aa).

Positions M1–S26 are cleaved as a signal peptide.

It belongs to the NPC2 family. As to quaternary structure, monomer.

Functionally, catalyzes the intermembrane transfer of phosphatidylglycerol and phosphatidylinositol. The chain is Putative phosphatidylglycerol/phosphatidylinositol transfer protein 1 from Dictyostelium discoideum (Social amoeba).